An 82-amino-acid polypeptide reads, in one-letter code: Large ribosomal subunit protein bL31B (82 aa).

It belongs to the bacterial ribosomal protein bL31 family. Type B subfamily. As to quaternary structure, part of the 50S ribosomal subunit.

This Pectobacterium carotovorum subsp. carotovorum (strain PC1) protein is Large ribosomal subunit protein bL31B.